A 313-amino-acid chain; its full sequence is 2-oxoglutarate-dependent dioxygenase eupC (313 aa).

Residues 187–284 (PSIPMRFLHY…LNAKALDGSG (98 aa)) enclose the Fe2OG dioxygenase domain. 3 residues coordinate Fe cation: histidine 212, aspartate 214, and histidine 263. Lysine 274 contacts 2-oxoglutarate.

Belongs to the iron/ascorbate-dependent oxidoreductase family. It depends on Fe(2+) as a cofactor.

It functions in the pathway secondary metabolite biosynthesis; terpenoid biosynthesis. Its function is as follows. 2-oxoglutarate-dependent dioxygenase; part of the gene cluster that mediates the biosynthesis of eupenifeldin, a bistropolone meroterpenoid that acts as an antitumor agent. The first step of eupenifeldin biosynthesis is the biosynthesis of 3-methylorcinaldehyde performed by the non-reducing polyketide synthase eupA. Oxidative dearomatization of 3-methylorcinaldehyde likely catalyzed by the FAD-dependent monooxygenase eupB is followed by oxidative ring expansion by the 2-oxoglutarate-dependent dioxygenase eupC to provide the first tropolone metabolite, tropolone stipitaldehyde. In parallel, generation of sesquiterpene alpha-humulene from farnesylpyrophosphate (FPP) is catalyzed by the terpene cyclase eupE. The cytochrome P450 monooxygenase eupD then hydroxylates humulene to humulenol. The putative Diels-Alderase eupF probably catalyzes the formation of the tropolone-humulene skeleton by linking humulenol and the polyketide moiety. The short-chain dehydrogenase/reductase eupG and the flavin-dependent monooxygenase eupH are also essential for eupenifeldin biosynthesis and are likely the additional decorating enzymes of the tropolone-humulene skeleton to produce final eupenifeldin or derivatives. This is 2-oxoglutarate-dependent dioxygenase eupC from Phoma sp.